A 51-amino-acid polypeptide reads, in one-letter code: Large ribosomal subunit protein eL39 (51 aa).

It belongs to the eukaryotic ribosomal protein eL39 family.

The polypeptide is Large ribosomal subunit protein eL39 (rpl39e) (Pyrococcus abyssi (strain GE5 / Orsay)).